The following is a 218-amino-acid chain: Phosphatidylserine decarboxylase proenzyme (218 aa).

Serine 183 acts as the Schiff-base intermediate with substrate; via pyruvic acid in catalysis. Serine 183 is modified (pyruvic acid (Ser); by autocatalysis).

It belongs to the phosphatidylserine decarboxylase family. PSD-A subfamily. In terms of assembly, heterodimer of a large membrane-associated beta subunit and a small pyruvoyl-containing alpha subunit. Requires pyruvate as cofactor. Post-translationally, is synthesized initially as an inactive proenzyme. Formation of the active enzyme involves a self-maturation process in which the active site pyruvoyl group is generated from an internal serine residue via an autocatalytic post-translational modification. Two non-identical subunits are generated from the proenzyme in this reaction, and the pyruvate is formed at the N-terminus of the alpha chain, which is derived from the carboxyl end of the proenzyme. The post-translation cleavage follows an unusual pathway, termed non-hydrolytic serinolysis, in which the side chain hydroxyl group of the serine supplies its oxygen atom to form the C-terminus of the beta chain, while the remainder of the serine residue undergoes an oxidative deamination to produce ammonia and the pyruvoyl prosthetic group on the alpha chain.

Its subcellular location is the cell membrane. It carries out the reaction a 1,2-diacyl-sn-glycero-3-phospho-L-serine + H(+) = a 1,2-diacyl-sn-glycero-3-phosphoethanolamine + CO2. The protein operates within phospholipid metabolism; phosphatidylethanolamine biosynthesis; phosphatidylethanolamine from CDP-diacylglycerol: step 2/2. Its function is as follows. Catalyzes the formation of phosphatidylethanolamine (PtdEtn) from phosphatidylserine (PtdSer). This Magnetococcus marinus (strain ATCC BAA-1437 / JCM 17883 / MC-1) protein is Phosphatidylserine decarboxylase proenzyme.